A 173-amino-acid polypeptide reads, in one-letter code: Crossover junction endodeoxyribonuclease RuvC (173 aa).

Active-site residues include D8, E67, and D139. The Mg(2+) site is built by D8, E67, and D139.

It belongs to the RuvC family. In terms of assembly, homodimer which binds Holliday junction (HJ) DNA. The HJ becomes 2-fold symmetrical on binding to RuvC with unstacked arms; it has a different conformation from HJ DNA in complex with RuvA. In the full resolvosome a probable DNA-RuvA(4)-RuvB(12)-RuvC(2) complex forms which resolves the HJ. Mg(2+) is required as a cofactor.

The protein resides in the cytoplasm. It catalyses the reaction Endonucleolytic cleavage at a junction such as a reciprocal single-stranded crossover between two homologous DNA duplexes (Holliday junction).. Its function is as follows. The RuvA-RuvB-RuvC complex processes Holliday junction (HJ) DNA during genetic recombination and DNA repair. Endonuclease that resolves HJ intermediates. Cleaves cruciform DNA by making single-stranded nicks across the HJ at symmetrical positions within the homologous arms, yielding a 5'-phosphate and a 3'-hydroxyl group; requires a central core of homology in the junction. The consensus cleavage sequence is 5'-(A/T)TT(C/G)-3'. Cleavage occurs on the 3'-side of the TT dinucleotide at the point of strand exchange. HJ branch migration catalyzed by RuvA-RuvB allows RuvC to scan DNA until it finds its consensus sequence, where it cleaves and resolves the cruciform DNA. In Pseudoalteromonas atlantica (strain T6c / ATCC BAA-1087), this protein is Crossover junction endodeoxyribonuclease RuvC.